We begin with the raw amino-acid sequence, 787 residues long: Endonuclease MutS2 (787 aa).

334–341 contacts ATP; it reads GPNTGGKT. Residues 685–709 are disordered; the sequence is KAQDPAKSAKQPRASVKRSGSSGMS. The region spanning 712–787 is the Smr domain; it reads LDLRGHRYEE…GDGSTVVHFK (76 aa).

It belongs to the DNA mismatch repair MutS family. MutS2 subfamily. In terms of assembly, homodimer. Binds to stalled ribosomes, contacting rRNA.

Endonuclease that is involved in the suppression of homologous recombination and thus may have a key role in the control of bacterial genetic diversity. Functionally, acts as a ribosome collision sensor, splitting the ribosome into its 2 subunits. Detects stalled/collided 70S ribosomes which it binds and splits by an ATP-hydrolysis driven conformational change. Acts upstream of the ribosome quality control system (RQC), a ribosome-associated complex that mediates the extraction of incompletely synthesized nascent chains from stalled ribosomes and their subsequent degradation. Probably generates substrates for RQC. This chain is Endonuclease MutS2, found in Levilactobacillus brevis (strain ATCC 367 / BCRC 12310 / CIP 105137 / JCM 1170 / LMG 11437 / NCIMB 947 / NCTC 947) (Lactobacillus brevis).